A 282-amino-acid chain; its full sequence is Acetyl-coenzyme A carboxylase carboxyl transferase subunit beta (282 aa).

Positions 29–282 (LMKRCPNCGL…LLKYGGMQDD (254 aa)) constitute a CoA carboxyltransferase N-terminal domain. Zn(2+)-binding residues include cysteine 33, cysteine 36, cysteine 51, and cysteine 54. The C4-type zinc finger occupies 33 to 54 (CPNCGLEFFARRLDKYKTCPDC).

Belongs to the AccD/PCCB family. Acetyl-CoA carboxylase is a heterohexamer composed of biotin carboxyl carrier protein (AccB), biotin carboxylase (AccC) and two subunits each of ACCase subunit alpha (AccA) and ACCase subunit beta (AccD). Zn(2+) is required as a cofactor.

The protein resides in the cytoplasm. The enzyme catalyses N(6)-carboxybiotinyl-L-lysyl-[protein] + acetyl-CoA = N(6)-biotinyl-L-lysyl-[protein] + malonyl-CoA. The protein operates within lipid metabolism; malonyl-CoA biosynthesis; malonyl-CoA from acetyl-CoA: step 1/1. Component of the acetyl coenzyme A carboxylase (ACC) complex. Biotin carboxylase (BC) catalyzes the carboxylation of biotin on its carrier protein (BCCP) and then the CO(2) group is transferred by the transcarboxylase to acetyl-CoA to form malonyl-CoA. The protein is Acetyl-coenzyme A carboxylase carboxyl transferase subunit beta of Lactobacillus delbrueckii subsp. bulgaricus (strain ATCC 11842 / DSM 20081 / BCRC 10696 / JCM 1002 / NBRC 13953 / NCIMB 11778 / NCTC 12712 / WDCM 00102 / Lb 14).